A 165-amino-acid chain; its full sequence is Shikimate kinase (165 aa).

11 to 16 (GAGKTT) is an ATP binding site. Threonine 15 contacts Mg(2+). Substrate is bound by residues aspartate 33, arginine 57, and glycine 78. Arginine 116 contributes to the ATP binding site. Arginine 134 is a binding site for substrate.

It belongs to the shikimate kinase family. Monomer. Requires Mg(2+) as cofactor.

It is found in the cytoplasm. It carries out the reaction shikimate + ATP = 3-phosphoshikimate + ADP + H(+). It participates in metabolic intermediate biosynthesis; chorismate biosynthesis; chorismate from D-erythrose 4-phosphate and phosphoenolpyruvate: step 5/7. Catalyzes the specific phosphorylation of the 3-hydroxyl group of shikimic acid using ATP as a cosubstrate. This is Shikimate kinase from Bacillus anthracis (strain A0248).